The chain runs to 73 residues: uncharacterized protein (73 aa).

Positions 1 to 21 (MTLFSSLSSLSTGSLKSSVSS) are cleaved as a signal peptide. Positions 1–38 (MTLFSSLSSLSTGSLKSSVSSIETGSSSGSFGSNETSG) are enriched in low complexity. The tract at residues 1–43 (MTLFSSLSSLSTGSLKSSVSSIETGSSSGSFGSNETSGWGSHH) is disordered. Asparagine 34 carries N-linked (GlcNAc...) asparagine glycosylation.

The protein localises to the secreted. This is an uncharacterized protein from Dictyostelium discoideum (Social amoeba).